The chain runs to 428 residues: Histidinol dehydrogenase (428 aa).

NAD(+)-binding residues include tyrosine 126, glutamine 188, and asparagine 211. Serine 234, glutamine 256, and histidine 259 together coordinate substrate. Positions 256 and 259 each coordinate Zn(2+). Catalysis depends on proton acceptor residues glutamate 324 and histidine 325. Residues histidine 325, aspartate 358, glutamate 412, and histidine 417 each contribute to the substrate site. Aspartate 358 contributes to the Zn(2+) binding site. Residue histidine 417 coordinates Zn(2+).

This sequence belongs to the histidinol dehydrogenase family. Requires Zn(2+) as cofactor.

It carries out the reaction L-histidinol + 2 NAD(+) + H2O = L-histidine + 2 NADH + 3 H(+). Its pathway is amino-acid biosynthesis; L-histidine biosynthesis; L-histidine from 5-phospho-alpha-D-ribose 1-diphosphate: step 9/9. In terms of biological role, catalyzes the sequential NAD-dependent oxidations of L-histidinol to L-histidinaldehyde and then to L-histidine. The chain is Histidinol dehydrogenase from Chlorobaculum tepidum (strain ATCC 49652 / DSM 12025 / NBRC 103806 / TLS) (Chlorobium tepidum).